The chain runs to 190 residues: Major sperm protein 32 (190 aa).

An MSP domain is found at 72-189 (MIQTQPGTKI…RRKNLPIEYN (118 aa)).

In terms of tissue distribution, sperm.

The protein resides in the cell projection. Its subcellular location is the pseudopodium. It is found in the cytoplasm. It localises to the cytoskeleton. Central component in molecular interactions underlying sperm crawling. Forms an extensive filament system that extends from sperm villipoda, along the leading edge of the pseudopod. The chain is Major sperm protein 32 (msp-32) from Caenorhabditis elegans.